A 539-amino-acid chain; its full sequence is GMP synthase [glutamine-hydrolyzing] (539 aa).

In terms of domain architecture, Glutamine amidotransferase type-1 spans 4–202 (KILILDFGSQ…VLQIAGCKPD (199 aa)). The active-site Nucleophile is the cysteine 81. Active-site residues include histidine 176 and glutamate 178. Positions 203-395 (WVMRDHIEEA…LGLPPEMVYR (193 aa)) constitute a GMPS ATP-PPase domain. 230-236 (SGGVDSS) provides a ligand contact to ATP.

Homodimer.

It carries out the reaction XMP + L-glutamine + ATP + H2O = GMP + L-glutamate + AMP + diphosphate + 2 H(+). Its pathway is purine metabolism; GMP biosynthesis; GMP from XMP (L-Gln route): step 1/1. Catalyzes the synthesis of GMP from XMP. This Cupriavidus taiwanensis (strain DSM 17343 / BCRC 17206 / CCUG 44338 / CIP 107171 / LMG 19424 / R1) (Ralstonia taiwanensis (strain LMG 19424)) protein is GMP synthase [glutamine-hydrolyzing].